The following is an 863-amino-acid chain: Oleate activated transcription factor 3 (863 aa).

The segment at residues 19–47 is a DNA-binding region (zn(2)-C6 fungal-type); sequence CTNCKKRKSKCDRTKPCGTCVRLGDVDSC. Over residues 52–63 the composition is skewed to polar residues; that stretch reads DSSGQPESSPSL. The disordered stretch occupies residues 52 to 99; the sequence is DSSGQPESSPSLNDADPLRKQSTPAERISPGFIKKRRSSQTRQDEDHW.

This sequence belongs to the OAF3 family.

It is found in the cytoplasm. Its subcellular location is the nucleus. The protein localises to the mitochondrion. Functionally, transcriptional inhibitor with a significantly increased number of target genes in response to oleate. This is Oleate activated transcription factor 3 (OAF3) from Saccharomyces cerevisiae (strain YJM789) (Baker's yeast).